Here is a 445-residue protein sequence, read N- to C-terminus: GRAM domain-containing protein 2B (445 aa).

Methionine 1 carries the N-acetylmethionine modification. Polar residues predominate over residues 1 to 10 (MVKKPISSSD). The tract at residues 1 to 119 (MVKKPISSSD…RKKSSSSSQY (119 aa)) is disordered. A compositionally biased stretch (low complexity) spans 18-37 (PSSPKSSAGASHSSTDSPSS). Composition is skewed to polar residues over residues 56-68 (KSPT…SSVE) and 82-93 (SKSSFDGSNLLS). Residues 94–112 (DKNDCKTESKADSKTERKK) show a composition bias toward basic and acidic residues. The region spanning 123 to 190 (MHFHKLFLDV…FSVTLIKKTK (68 aa)) is the GRAM domain. A phosphoserine mark is found at serine 238, serine 255, and serine 265. Positions 277–331 (DLEGYSSSGSQTPESENSRDFHVTESQTVLNVTKGETKPPRTDAHGSRAPDGKAK) are disordered. Residues 281–291 (YSSSGSQTPES) show a composition bias toward polar residues. The span at 311–330 (GETKPPRTDAHGSRAPDGKA) shows a compositional bias: basic and acidic residues.

The chain is GRAM domain-containing protein 2B (Gramd2b) from Rattus norvegicus (Rat).